The following is a 270-amino-acid chain: Aquaporin-11 (270 aa).

2 helical membrane passes run 5–25 (IMTM…ISIC) and 59–79 (FELG…GLFF). Residues 94-96 (DPS) carry the NPA 1 motif. The chain crosses the membrane as a helical span at residues 120 to 140 (IMGAAVSYRFAKIFWSFGLMA). A glycan (N-linked (GlcNAc...) asparagine) is linked at Asn148. Helical transmembrane passes span 153–173 (ASLQ…TIVN) and 184–204 (MLIS…VSGG). Positions 207–209 (NPT) match the NPA 2 motif. Residues 220-240 (GLSGPSFFLVYWFGPILGSSI) traverse the membrane as a helical segment.

The protein belongs to the MIP/aquaporin (TC 1.A.8) family.

It localises to the membrane. The catalysed reaction is H2O(in) = H2O(out). In terms of biological role, probable intracellular unorthodox aquaporin that may modulate the water content and osmolytes during anhydrobiosis. The sequence is that of Aquaporin-11 from Milnesium tardigradum (Water bear).